The chain runs to 105 residues: MTSSDGSDLTTLVNVGRSVARYFERIGITEIAQLRDRDPVELYERMSAAFGQRLDPCLLDTVMSAVDQAEGLPARPWWHYTPERKRLLAGEGHDRAGGTAGEGTA.

Involved in mitomycin resistance. May operate with McrA or may be a type of transcriptional activator protein. This is Mitomycin resistance protein McrB (mcrB) from Streptomyces lavendulae.